Here is a 1214-residue protein sequence, read N- to C-terminus: Protein charlatan (1214 aa).

Disordered regions lie at residues 1–20 (MATL…QSSN), 213–238 (HVNQ…RQEH), and 250–284 (SANA…GGRK). The segment covering 258-276 (AQSTPTSAPSNSSGGSTSS) has biased composition (low complexity). 2 C2H2-type zinc fingers span residues 305–327 (YACT…ENIH) and 333–356 (FQCY…LRMH). Disordered stretches follow at residues 367 to 397 (RRHV…NVTI) and 463 to 488 (PVAS…SGLL). Residues 473–485 (GSHGGNGNGGSGS) show a composition bias toward gly residues. 2 consecutive C2H2-type zinc fingers follow at residues 496–518 (FTCC…LNTH) and 522–545 (FVCL…LKVH). Disordered stretches follow at residues 741–790 (SASS…ATSP), 848–946 (NDED…SGPS), and 1062–1084 (LSTP…SNAS). Low complexity-rich tracts occupy residues 855 to 871 (QQHQ…QQQQ), 885 to 896 (NNNNNNNSNNNN), 923 to 946 (SPGT…SGPS), and 1071 to 1084 (KAAP…SNAS).

Expressed in the PNS and CNS. In early blastoderm stages, it is ubiquitously expressed, then, before stage 5, it disappears from the poles of the embryo and faint stripes are visible. At stage 5, it also accumulates in the dorsal region, cephalic furrow ectodermal patches between the tracheal pits, where neurons of the PNS appear. In older embryos (stage 15) a strong expression is mostly restricted to the central nervous system (CNS) and PNS. In PNS, the pattern suggests that expression occur in many of the neurons of the ventral, lateral and dorsal clusters of neurons. In third instar wing disks, it is expressed in rows of cells on either side of the prospective anterior wing margin and in groups of cells that coincide with proneural clusters of ac/sc expression. Also expressed independently of ac/sc in certain areas of the disk, such as the postnotum and posterior dorsal proximal wing. Expressed in the proneural clusters of the leg disks and in the eye/antenna disk.

It is found in the nucleus. Probable transcription factor involved in the development of the adult pattern of macrochaetae. Required for accumulation of achaete (ac) and scute (sc) in proneural clusters. Probably acts by binding to the proneural cluster-specific enhancers of the ac/sc complex and increasing enhancer efficiency, thereby acting as a stimulator of ac/sc expression in proneural clusters. Also required for correct development of the embryonic/larval peripheral nervous system (PNS). This is Protein charlatan (chn) from Drosophila melanogaster (Fruit fly).